The sequence spans 190 residues: ATP synthase subunit delta (190 aa).

The protein belongs to the ATPase delta chain family. In terms of assembly, F-type ATPases have 2 components, F(1) - the catalytic core - and F(0) - the membrane proton channel. F(1) has five subunits: alpha(3), beta(3), gamma(1), delta(1), epsilon(1). F(0) has three main subunits: a(1), b(2) and c(10-14). The alpha and beta chains form an alternating ring which encloses part of the gamma chain. F(1) is attached to F(0) by a central stalk formed by the gamma and epsilon chains, while a peripheral stalk is formed by the delta and b chains.

It is found in the cell inner membrane. F(1)F(0) ATP synthase produces ATP from ADP in the presence of a proton or sodium gradient. F-type ATPases consist of two structural domains, F(1) containing the extramembraneous catalytic core and F(0) containing the membrane proton channel, linked together by a central stalk and a peripheral stalk. During catalysis, ATP synthesis in the catalytic domain of F(1) is coupled via a rotary mechanism of the central stalk subunits to proton translocation. In terms of biological role, this protein is part of the stalk that links CF(0) to CF(1). It either transmits conformational changes from CF(0) to CF(1) or is implicated in proton conduction. The protein is ATP synthase subunit delta of Methylobacterium sp. (strain 4-46).